The following is a 431-amino-acid chain: Trigger factor (431 aa).

The PPIase FKBP-type domain maps to 165 to 250 (GDTVVIDFDG…IHELKRKELP (86 aa)).

This sequence belongs to the FKBP-type PPIase family. Tig subfamily.

It is found in the cytoplasm. The catalysed reaction is [protein]-peptidylproline (omega=180) = [protein]-peptidylproline (omega=0). Its function is as follows. Involved in protein export. Acts as a chaperone by maintaining the newly synthesized protein in an open conformation. Functions as a peptidyl-prolyl cis-trans isomerase. The protein is Trigger factor of Leuconostoc mesenteroides subsp. mesenteroides (strain ATCC 8293 / DSM 20343 / BCRC 11652 / CCM 1803 / JCM 6124 / NCDO 523 / NBRC 100496 / NCIMB 8023 / NCTC 12954 / NRRL B-1118 / 37Y).